A 103-amino-acid polypeptide reads, in one-letter code: RVLKLPFILVQVPSPLDLSIRCNSSEAVLLKILLWNSPSFTSSITMYSLPLFTSIKTTLVSQNSYFNFFLGLAIKSCSLNFCLNSNNLGLSVINPFSLSTWVL.

It is found in the mitochondrion. This is an uncharacterized protein from Claviceps purpurea (Ergot fungus).